Here is a 1400-residue protein sequence, read N- to C-terminus: DNA-directed RNA polymerase subunit beta' (1400 aa).

Residues Cys71, Cys73, Cys86, and Cys89 each contribute to the Zn(2+) site. Positions 462, 464, and 466 each coordinate Mg(2+). 4 residues coordinate Zn(2+): Cys811, Cys885, Cys892, and Cys895.

The protein belongs to the RNA polymerase beta' chain family. As to quaternary structure, the RNAP catalytic core consists of 2 alpha, 1 beta, 1 beta' and 1 omega subunit. When a sigma factor is associated with the core the holoenzyme is formed, which can initiate transcription. Requires Mg(2+) as cofactor. Zn(2+) serves as cofactor.

The enzyme catalyses RNA(n) + a ribonucleoside 5'-triphosphate = RNA(n+1) + diphosphate. DNA-dependent RNA polymerase catalyzes the transcription of DNA into RNA using the four ribonucleoside triphosphates as substrates. The sequence is that of DNA-directed RNA polymerase subunit beta' from Brucella melitensis biotype 1 (strain ATCC 23456 / CCUG 17765 / NCTC 10094 / 16M).